A 159-amino-acid polypeptide reads, in one-letter code: Dihydrofolate reductase (159 aa).

One can recognise a DHFR domain in the interval 2 to 157; it reads TLSILVAHDL…IPHTFLHLIR (156 aa). 6-8 contacts substrate; that stretch reads LVA. Residues 7 to 8 and 15 to 20 contribute to the NADP(+) site; these read VA and IGFENQ. Substrate is bound at residue Asp28. 44 to 47 provides a ligand contact to NADP(+); that stretch reads GRKT. Arg58 lines the substrate pocket. Residues 63–66 and 93–98 contribute to the NADP(+) site; these read LTSD and FGGQTL. Thr112 lines the substrate pocket.

It belongs to the dihydrofolate reductase family.

It carries out the reaction (6S)-5,6,7,8-tetrahydrofolate + NADP(+) = 7,8-dihydrofolate + NADPH + H(+). It participates in cofactor biosynthesis; tetrahydrofolate biosynthesis; 5,6,7,8-tetrahydrofolate from 7,8-dihydrofolate: step 1/1. Functionally, key enzyme in folate metabolism. Catalyzes an essential reaction for de novo glycine and purine synthesis, and for DNA precursor synthesis. The chain is Dihydrofolate reductase (folA) from Staphylococcus aureus (strain COL).